A 529-amino-acid chain; its full sequence is Serine/threonine-protein kinase RIO2 (529 aa).

The region spanning 97-273 is the Protein kinase domain; sequence VGNQIGIGKE…RDVTCVRTFF (177 aa). Lysine 123 lines the ATP pocket. The Proton acceptor role is filled by aspartate 228. Disordered stretches follow at residues 331–366 and 411–452; these read RNRQ…KDHE and EGYK…GHVA. Over residues 337–346 the composition is skewed to acidic residues; the sequence is DLGEDEDDSD. Over residues 411–428 the composition is skewed to basic and acidic residues; the sequence is EGYKDIELPPEDFKRPAD. Acidic residues predominate over residues 429-447; that stretch reads SENDDENDEDEEEGEEEDA.

This sequence belongs to the protein kinase superfamily. RIO-type Ser/Thr kinase family. The cofactor is Mg(2+). As to expression, expressed in pharynx (metacorpus and posterior bulbus). Expression is restricted to adult stage.

It carries out the reaction L-seryl-[protein] + ATP = O-phospho-L-seryl-[protein] + ADP + H(+). It catalyses the reaction L-threonyl-[protein] + ATP = O-phospho-L-threonyl-[protein] + ADP + H(+). Required for larval development. This Caenorhabditis elegans protein is Serine/threonine-protein kinase RIO2.